A 360-amino-acid chain; its full sequence is Phospho-N-acetylmuramoyl-pentapeptide-transferase (360 aa).

Helical transmembrane passes span 27–47, 71–91, 98–118, 142–162, 168–188, 199–219, 236–256, 263–283, 288–308, and 338–358; these read VMAV…LIRF, TPTM…LLWA, VWIV…DDYL, LVLA…TFVM, YMPY…VGSS, GLAI…AYLT, ASEL…FLWF, VFMG…IAVL, ILLV…ILQV, and VIVR…VTLK.

It belongs to the glycosyltransferase 4 family. MraY subfamily. Requires Mg(2+) as cofactor.

It is found in the cell inner membrane. It carries out the reaction UDP-N-acetyl-alpha-D-muramoyl-L-alanyl-gamma-D-glutamyl-meso-2,6-diaminopimeloyl-D-alanyl-D-alanine + di-trans,octa-cis-undecaprenyl phosphate = di-trans,octa-cis-undecaprenyl diphospho-N-acetyl-alpha-D-muramoyl-L-alanyl-D-glutamyl-meso-2,6-diaminopimeloyl-D-alanyl-D-alanine + UMP. The protein operates within cell wall biogenesis; peptidoglycan biosynthesis. In terms of biological role, catalyzes the initial step of the lipid cycle reactions in the biosynthesis of the cell wall peptidoglycan: transfers peptidoglycan precursor phospho-MurNAc-pentapeptide from UDP-MurNAc-pentapeptide onto the lipid carrier undecaprenyl phosphate, yielding undecaprenyl-pyrophosphoryl-MurNAc-pentapeptide, known as lipid I. The polypeptide is Phospho-N-acetylmuramoyl-pentapeptide-transferase (Psychromonas ingrahamii (strain DSM 17664 / CCUG 51855 / 37)).